The sequence spans 335 residues: Probable cytosolic iron-sulfur protein assembly protein Ciao1 (335 aa).

7 WD repeats span residues 12-51 (GHKGRIWGVAWHPKGNVFASCGEDKAIRIWSLTGSTWSTK), 57-96 (GHKRTIREIRWSPCGQYLASASFDATTAIWSKSSGEFECN), 101-140 (GHENEVKSVSWSRSGGLLATCSRDKSVWIWEVAGDDEFEC), 146-185 (SHTQDVKRVVWHPTKEVLASASYDNTIKMYAEDPVDNDWD), 192-231 (SHTSTIWGIDFDADGERLVSCSDDTTIKIWKAYHPGNSAG), 250-289 (QHSRAIYDVSWCKLTGLIATACGDDGIRIFKETSDSKPDE), and 301-335 (AHDQDVNSVQWNPVVAGQLISCSDDGTIKIWKVTE).

The protein belongs to the WD repeat CIA1 family.

Functionally, essential component of the cytosolic iron-sulfur (Fe/S) protein assembly machinery. Required for the maturation of extramitochondrial Fe/S proteins. This chain is Probable cytosolic iron-sulfur protein assembly protein Ciao1, found in Drosophila erecta (Fruit fly).